An 844-amino-acid polypeptide reads, in one-letter code: Serrate RNA effector molecule homolog B (844 aa).

4 disordered regions span residues 1 to 90 (MADS…HGSD), 277 to 401 (EAAK…PRPL), 555 to 575 (ELLS…GNPT), and 794 to 825 (PNPY…MRGD). 2 stretches are compositionally biased toward basic and acidic residues: residues 16–73 (FRRE…RHDI) and 277–337 (EAAK…ETRK). Acidic residues predominate over residues 349–359 (SDDGSDSESDT). Residues 376–397 (DTPKKEEETEKPKEKPKEDTVK) show a composition bias toward basic and acidic residues.

The protein belongs to the ARS2 family. In terms of assembly, interacts ncbp1/cbp80.

The protein localises to the nucleus. It localises to the nucleoplasm. It is found in the cytoplasm. Acts as a mediator between the cap-binding complex (CBC) and the primary microRNAs (miRNAs) processing machinery during cell proliferation. Contributes to the stability and delivery of capped primary miRNA transcripts to the primary miRNA processing complex, thereby playing a role in RNA-mediated gene silencing (RNAi) by miRNAs. The sequence is that of Serrate RNA effector molecule homolog B (srrt-b) from Xenopus laevis (African clawed frog).